Here is a 332-residue protein sequence, read N- to C-terminus: Ferredoxin--NADP reductase 2 (332 aa).

Residues glutamate 37, glutamine 45, tyrosine 50, valine 90, phenylalanine 124, aspartate 285, and threonine 326 each contribute to the FAD site.

It belongs to the ferredoxin--NADP reductase type 2 family. Homodimer. The cofactor is FAD.

The catalysed reaction is 2 reduced [2Fe-2S]-[ferredoxin] + NADP(+) + H(+) = 2 oxidized [2Fe-2S]-[ferredoxin] + NADPH. The sequence is that of Ferredoxin--NADP reductase 2 from Bacillus pumilus (strain SAFR-032).